The primary structure comprises 2033 residues: Major viral transcription factor ICP4 homolog (2033 aa).

Over residues 1 to 16 (MFWHQPRQQQLRQLQR) the composition is skewed to low complexity. Disordered stretches follow at residues 1–47 (MFWH…PPSP), 95–145 (FSDP…LPAP), 157–199 (LSSS…GSSY), 218–240 (PPRS…ADRC), 277–301 (DQSP…CVGE), 313–338 (EERK…ESLP), 350–461 (AEIN…GAVA), 505–527 (SFAQ…ARQR), 719–747 (LPPD…ASRT), 1015–1064 (GKQS…GALN), 1085–1186 (LLSD…PGDP), 1294–1342 (ETWR…EGGT), 1420–1451 (ASPH…RDAA), 1531–1612 (VVFP…PPAA), 1636–1655 (RFDE…GGKP), 1664–1718 (LCEQ…SPSP), and 1746–2033 (EISP…GTER). Residues 157–173 (LSSSSPSGSSRGSVTSP) are compositionally biased toward low complexity. Over residues 223 to 240 (PDCRRGEPVSEDGMADRC) the composition is skewed to basic and acidic residues. Residues 313–326 (EERKEAARRSPDAE) show a composition bias toward basic and acidic residues. Residues 359–368 (ESDEAEDEDA) are compositionally biased toward acidic residues. Residues 507 to 518 (AQRQQPRQQQHA) are compositionally biased toward low complexity. Over residues 732–741 (KSRGGRGGGS) the composition is skewed to gly residues. The span at 1031–1056 (RATASSPRTPASRPPHGSAAAPPSGR) shows a compositional bias: low complexity. The span at 1086-1097 (LSDEAGTDDDGD) shows a compositional bias: acidic residues. The span at 1169 to 1181 (SSSSFASSSLASA) shows a compositional bias: low complexity. Residues 1294-1303 (ETWRDAEDHP) are compositionally biased toward basic and acidic residues. Over residues 1575 to 1591 (SHDRSPSSSSRRRDGRP) the composition is skewed to basic and acidic residues. Basic residues predominate over residues 1592–1602 (SSRRRPSRRMS). Composition is skewed to basic and acidic residues over residues 1752–1765 (RRRD…GCRQ) and 1774–1795 (EGGR…DSVP). Positions 1812–1843 (SAGRSSSSSSSSSSSSSSSPSSRPSRSATPSL) are enriched in low complexity. Residues 1853-1869 (APVDRSRSGRRRERDRP) are compositionally biased toward basic and acidic residues. Residues 1912-1921 (TPSSATTLPS) show a composition bias toward polar residues. The span at 1927 to 1936 (DSVDETETED) shows a compositional bias: acidic residues. Residues 1937–1948 (SAPPARLAPSPL) are compositionally biased toward low complexity.

This sequence belongs to the herpesviridae ICP4 family. Post-translationally, a long stretch of serine residues may be a major site of phosphorylation.

The protein localises to the host nucleus. Functionally, this IE protein is a multifunctional protein capable of migrating to the nucleus, binding to DNA, trans-activating other viral genes, and autoregulating its own synthesis. It is required for the switch from immediate-early to early mode of gene expression. The protein is Major viral transcription factor ICP4 homolog (ICP4B) of Amazona oratrix (yellow-headed parrot).